A 725-amino-acid polypeptide reads, in one-letter code: Catalase-peroxidase (725 aa).

The segment at 1–20 (MSSEAKCPFPHAANRSRSNQ) is disordered. The tryptophyl-tyrosyl-methioninium (Trp-Tyr) (with M-241) cross-link spans 91-215 (WHATGTYRTM…LSATHMGLIY (125 aa)). Catalysis depends on histidine 92, which acts as the Proton acceptor. Positions 215-241 (YVNPEGPDGSGDYMAAAKDIRATFYRM) form a cross-link, tryptophyl-tyrosyl-methioninium (Tyr-Met) (with W-91). Residue histidine 256 coordinates heme b.

It belongs to the peroxidase family. Peroxidase/catalase subfamily. As to quaternary structure, homodimer or homotetramer. It depends on heme b as a cofactor. In terms of processing, formation of the three residue Trp-Tyr-Met cross-link is important for the catalase, but not the peroxidase activity of the enzyme.

The enzyme catalyses H2O2 + AH2 = A + 2 H2O. The catalysed reaction is 2 H2O2 = O2 + 2 H2O. Functionally, bifunctional enzyme with both catalase and broad-spectrum peroxidase activity. In Janthinobacterium sp. (strain Marseille) (Minibacterium massiliensis), this protein is Catalase-peroxidase.